We begin with the raw amino-acid sequence, 453 residues long: Serine/threonine-protein phosphatase 2A regulatory subunit B'' subunit gamma (453 aa).

EF-hand domains follow at residues 273–308 (PSAL…TMTN) and 341–376 (KEPA…IQEL). Positions 286, 288, 290, 292, and 297 each coordinate Ca(2+).

Interacts with MCM3AP/GANP, PPP5C, and the phosphatase 2A core enzyme composed of the PPP2CA catalytic subunit and the constant regulatory subunit PPP2R1A. Finds in a complex with ABCB1, TFPI2 and PPP2R3C; leading to the dephosphorylation of ABCB1.

The protein localises to the nucleus. The protein resides in the cytoplasm. Functionally, may regulate MCM3AP phosphorylation through phosphatase recruitment. May act as a negative regulator of ABCB1 expression and function through the dephosphorylation of ABCB1 by TFPI2/PPP2R3C complex. May play a role in the activation-induced cell death of B-cells. The polypeptide is Serine/threonine-protein phosphatase 2A regulatory subunit B'' subunit gamma (PPP2R3C) (Bos taurus (Bovine)).